Consider the following 404-residue polypeptide: Argininosuccinate synthase (404 aa).

ATP contacts are provided by residues 10-18 (AYSGGVDTS) and Ala38. Residue Tyr89 coordinates L-citrulline. Residue Gly119 participates in ATP binding. Residues Thr121, Asn125, and Asp126 each contribute to the L-aspartate site. Asn125 provides a ligand contact to L-citrulline. L-citrulline-binding residues include Arg129, Ser177, Ser186, Glu262, and Tyr274.

It belongs to the argininosuccinate synthase family. Type 1 subfamily. As to quaternary structure, homotetramer.

The protein resides in the cytoplasm. The enzyme catalyses L-citrulline + L-aspartate + ATP = 2-(N(omega)-L-arginino)succinate + AMP + diphosphate + H(+). Its pathway is amino-acid biosynthesis; L-arginine biosynthesis; L-arginine from L-ornithine and carbamoyl phosphate: step 2/3. The chain is Argininosuccinate synthase from Prochlorococcus marinus (strain AS9601).